A 320-amino-acid chain; its full sequence is ATP-dependent 6-phosphofructokinase (320 aa).

ATP is bound at residue Gly-12. ADP contacts are provided by residues 22–26 (RGVVR) and 55–60 (RYSVSD). ATP is bound by residues 73 to 74 (RF) and 103 to 106 (GDGS). Asp-104 serves as a coordination point for Mg(2+). 126–128 (TID) is a substrate binding site. Asp-128 functions as the Proton acceptor in the catalytic mechanism. Arg-155 provides a ligand contact to ADP. Residues Arg-163 and 170–172 (MGR) each bind substrate. Residues 186–188 (GCE), Lys-212, and 214–216 (KKH) each bind ADP. Residues Glu-223, Arg-244, and 250–253 (HIQR) contribute to the substrate site.

It belongs to the phosphofructokinase type A (PFKA) family. ATP-dependent PFK group I subfamily. Prokaryotic clade 'B1' sub-subfamily. In terms of assembly, homotetramer. Mg(2+) serves as cofactor.

It localises to the cytoplasm. The enzyme catalyses beta-D-fructose 6-phosphate + ATP = beta-D-fructose 1,6-bisphosphate + ADP + H(+). It participates in carbohydrate degradation; glycolysis; D-glyceraldehyde 3-phosphate and glycerone phosphate from D-glucose: step 3/4. Allosterically activated by ADP and other diphosphonucleosides, and allosterically inhibited by phosphoenolpyruvate. Its function is as follows. Catalyzes the phosphorylation of D-fructose 6-phosphate to fructose 1,6-bisphosphate by ATP, the first committing step of glycolysis. This is ATP-dependent 6-phosphofructokinase from Escherichia fergusonii (strain ATCC 35469 / DSM 13698 / CCUG 18766 / IAM 14443 / JCM 21226 / LMG 7866 / NBRC 102419 / NCTC 12128 / CDC 0568-73).